Consider the following 117-residue polypeptide: MKYVDGFVVAVPADKKDAYREMAAKAAPLFKEFGALRIVECWASDVPDGKVTDFRMAVKAEENEEVVFSWIEYPSKEVRDAANQKMMSDPRMKEFGESMPFDGKRMIYGGFESIIDE.

This is an uncharacterized protein from Escherichia coli O157:H7.